Reading from the N-terminus, the 352-residue chain is Rhodopsin (352 aa).

At 1–36 the chain is on the extracellular side; that stretch reads MNGTEGPFFYIPMVNTTGIVRSPYEYPQYYLVNPAA. N2 and N15 each carry an N-linked (GlcNAc...) asparagine glycan. The helical transmembrane segment at 37–61 threads the bilayer; it reads YACLGAYMFFLILVGFPVNFLTLYV. The Cytoplasmic segment spans residues 62–73; sequence TLEHKKLRTPLN. A helical membrane pass occupies residues 74–96; the sequence is YILLNLAVADLFMVFGGFTTTMY. The Extracellular portion of the chain corresponds to 97–110; the sequence is TSMHGYFVLGRLGC. Residues C110 and C187 are joined by a disulfide bond. The chain crosses the membrane as a helical span at residues 111 to 133; that stretch reads NIEGFFATLGGEIALWSLVVLAI. A 'Ionic lock' involved in activated form stabilization motif is present at residues 134 to 136; sequence ERW. Residues 134 to 152 lie on the Cytoplasmic side of the membrane; sequence ERWVVVCKPISNFRFGENH. Residues 153–173 traverse the membrane as a helical segment; sequence AIMGVAFTWFMASACAVPPLV. Residues 174 to 202 are Extracellular-facing; that stretch reads GWSRYIPEGMQCSCGVDYYTRAEGFNNES. N-linked (GlcNAc...) asparagine glycosylation occurs at N200. A helical transmembrane segment spans residues 203-224; it reads FVIYMFIVHFCIPLAVVGFCYG. The Cytoplasmic segment spans residues 225–252; the sequence is RLLCAVKEAAAAQQESETTQRAEREVSR. The helical transmembrane segment at 253 to 274 threads the bilayer; the sequence is MVVIMVIGFLVCWLPYASVAWY. Topologically, residues 275–286 are extracellular; that stretch reads IFTHQGSEFGPP. A helical membrane pass occupies residues 287–308; that stretch reads FMTVPAFFAKSSSIYNPMIYIC. K296 is modified (N6-(retinylidene)lysine). Residues 309 to 352 are Cytoplasmic-facing; it reads MNKQFRHCMITTLCCGKNPFEEEEGASTTKTEASSVSSSSVSPA. Residues C322 and C323 are each lipidated (S-palmitoyl cysteine). Residues 331–352 are disordered; sequence EEGASTTKTEASSVSSSSVSPA. A compositionally biased stretch (low complexity) spans 342–352; it reads SSVSSSSVSPA.

Belongs to the G-protein coupled receptor 1 family. Opsin subfamily. In terms of processing, phosphorylated on some or all of the serine and threonine residues present in the C-terminal region. Post-translationally, contains one covalently linked retinal chromophore.

It is found in the membrane. Its subcellular location is the cell projection. It localises to the cilium. The protein resides in the photoreceptor outer segment. Functionally, photoreceptor required for image-forming vision at low light intensity. While most salt water fish species use retinal as chromophore, most freshwater fish use 3-dehydroretinal, or a mixture of retinal and 3-dehydroretinal. Light-induced isomerization of 11-cis to all-trans retinal triggers a conformational change that activates signaling via G-proteins. Subsequent receptor phosphorylation mediates displacement of the bound G-protein alpha subunit by arrestin and terminates signaling. In Zosterisessor ophiocephalus (Grass goby), this protein is Rhodopsin (rho).